The chain runs to 209 residues: LexA repressor (209 aa).

The H-T-H motif DNA-binding region spans 30–50 (RVEIAREIGFKSPNAAEEHLK). Active-site for autocatalytic cleavage activity residues include S126 and K163.

The protein belongs to the peptidase S24 family. In terms of assembly, homodimer.

The enzyme catalyses Hydrolysis of Ala-|-Gly bond in repressor LexA.. Functionally, represses a number of genes involved in the response to DNA damage (SOS response), including recA and lexA. In the presence of single-stranded DNA, RecA interacts with LexA causing an autocatalytic cleavage which disrupts the DNA-binding part of LexA, leading to derepression of the SOS regulon and eventually DNA repair. The protein is LexA repressor of Glaesserella parasuis serovar 5 (strain SH0165) (Haemophilus parasuis).